The following is a 126-amino-acid chain: Holo-[acyl-carrier-protein] synthase (126 aa).

Mg(2+) is bound by residues aspartate 9 and glutamate 58.

This sequence belongs to the P-Pant transferase superfamily. AcpS family. Requires Mg(2+) as cofactor.

It localises to the cytoplasm. The catalysed reaction is apo-[ACP] + CoA = holo-[ACP] + adenosine 3',5'-bisphosphate + H(+). In terms of biological role, transfers the 4'-phosphopantetheine moiety from coenzyme A to a Ser of acyl-carrier-protein. In Yersinia pseudotuberculosis serotype I (strain IP32953), this protein is Holo-[acyl-carrier-protein] synthase.